Reading from the N-terminus, the 437-residue chain is Methylenetetrahydrofolate--tRNA-(uracil-5-)-methyltransferase TrmFO (437 aa).

10-15 serves as a coordination point for FAD; that stretch reads GAGLAG.

This sequence belongs to the MnmG family. TrmFO subfamily. The cofactor is FAD.

The protein resides in the cytoplasm. The enzyme catalyses uridine(54) in tRNA + (6R)-5,10-methylene-5,6,7,8-tetrahydrofolate + NADH + H(+) = 5-methyluridine(54) in tRNA + (6S)-5,6,7,8-tetrahydrofolate + NAD(+). It carries out the reaction uridine(54) in tRNA + (6R)-5,10-methylene-5,6,7,8-tetrahydrofolate + NADPH + H(+) = 5-methyluridine(54) in tRNA + (6S)-5,6,7,8-tetrahydrofolate + NADP(+). Its function is as follows. Catalyzes the folate-dependent formation of 5-methyl-uridine at position 54 (M-5-U54) in all tRNAs. The protein is Methylenetetrahydrofolate--tRNA-(uracil-5-)-methyltransferase TrmFO of Lysinibacillus sphaericus (strain C3-41).